Reading from the N-terminus, the 608-residue chain is Dextranase (608 aa).

The signal sequence occupies residues 1–19 (MATMLKLLALTLAISESAI). Positions 20–34 (GAVMHPPGNSHPGTH) are excised as a propeptide. Residues Asn39, Asn571, and Asn574 are each glycosylated (N-linked (GlcNAc...) asparagine).

It belongs to the glycosyl hydrolase 49 family. N-glycosylated.

The protein resides in the secreted. It catalyses the reaction Endohydrolysis of (1-&gt;6)-alpha-D-glucosidic linkages in dextran.. The sequence is that of Dextranase (DEX) from Talaromyces minioluteus (Filamentous fungus).